The following is a 388-amino-acid chain: MKRNFPKLIALSLILSLSVTPIANAESNSNIKAKDKKHVQVNVEDKSIPTEVRNLAQKDYLSYVTSLDKIYNKEKASYTLGEPFKIYKFNKKSDGNYYFPVLNTEGNIDYIVTISPKVTKYSSSSSKYTINVSPFLSKVLNQYKDQQITILTNSKGYYVVTQNHKAKLVLKTPRLEDKKLKKTESIPTGNNVTQLKQKASVTMPTSQFKSNNYTYNEQYVNKLENFKIRETQGNNGWCAGYTMSALLNATYNTNKYHAEAVMRFLHPNLQGQRFQFTGLTPREMIYFGQTQGRSPQLLNRMTTYNEVDNLTKNNKGIAVLGSRVESRNGMHAGHAMAVVGNAKLDNGQEVIIIWNPWDNGFMTQDAKNNVIPVSNGDHYQWYSSIYGY.

The first 25 residues, M1 to A25, serve as a signal peptide directing secretion. Positions E26 to T214 are excised as a propeptide. Catalysis depends on residues C238, H334, and N355.

Belongs to the peptidase C47 family. In the cytoplasm, prematurely activated/folded ScpA forms a stable non-covalent complex with ScpB. Post-translationally, cleavage leads to the activation of ScpA probably by an auto-catalytic manner.

It localises to the secreted. It catalyses the reaction Broad endopeptidase action on proteins including elastin, but rather limited hydrolysis of small-molecule substrates. Assays are conveniently made with hemoglobin, casein or Z-Phe-Arg-NHMec as substrate.. Its activity is regulated as follows. Prematurely activated/folded staphopain A is inhibited by staphostatin A (ScpB), which is probably required to protect staphylococcal cytoplasmic proteins from degradation by ScpA. Functionally, cysteine protease that plays an important role in the inhibition of host innate immune response. Cleaves host elastins found in connective tissues, pulmonary surfactant protein A in the lungs, and the chemokine receptor CXCR2 on leukocytes. Proteolytic cleavage of surfactant protein A impairs bacterial phagocytosis by neutrophils while CXCR2 degradation blocks neutrophil activation and chemotaxis. Additionally, promotes vascular leakage by activating the plasma kallikerin/kinin system, resulting in hypotension. In Staphylococcus aureus (strain MSSA476), this protein is Staphopain A (sspP).